The chain runs to 595 residues: MRFTSTILLRVAVLLSLGGGSQTTSCTPGQPFPIPAYSKTSLQQTFEQIFETVSRSFDNESFHSTNVAIEVTSSQETLWSFYHAAKNQSSQDGSTVIGPDTVFRVARVSKLLTAIAILQLHDQGHISSLYDPINIYIPDLDPSTVQWGRITIWDLLNNVAGILDMYGYADIYTDFSARQRADLNLPPVPEDSLEGMPACQVDKSIPCDSAGLLSWLRSSRAVFEPHRINSNSNVGFSLLGILIERITGIDYERFISQTLIEPLHLNSTSFRPPHKNSGAVLQNDHTWNWDVGVNNPSVGLYSTPRDISTLLRWTLNESPSSLLNWFAPGFYAVGSHSLIGMPWNIFRTTAPLSIPNRPTTFNTVVGTLGPYTSVVVVMPEYDLAVSLMMNGALGHPHDILAKVTFPLVRAADKIALEKVRDNYAGTYKAEPRQKINSSITLSVSPDHGLYISELISNGSSILPVMERLASSKSGGGSNWIFQAVPTFLETKRRRTPHDRVVVNEEWRWTYVLDKPPGEGWNDWCLSSFDPVTYAGEPLTKMVFQKDAKSGRVLSVALSGYNITLPKGVQEAGIFAQLEGTSLDLHAQAGQEVLAG.

A signal peptide spans Met1–Thr23. N-linked (GlcNAc...) asparagine glycans are attached at residues Asn59, Asn87, Asn266, Asn436, Asn457, and Asn561.

It belongs to the beta-lactamase family.

It participates in secondary metabolite biosynthesis. Probable hydrolase; part of the gene cluster that mediates the biosynthesis of squalestatin S1 (SQS1, also known as zaragozic acid A), a heavily oxidized fungal polyketide that offers potent cholesterol lowering activity by targeting squalene synthase (SS). SQS1 is composed of a 2,8-dioxobicyclic[3.2.1]octane-3,4,5-tricarboxyclic acid core that is connected to two lipophilic polyketide arms. These initial steps feature the priming of an unusual benzoic acid starter unit onto the highly reducing polyketide synthase pks2, followed by oxaloacetate extension and product release to generate a tricarboxylic acid containing product. The phenylalanine ammonia lyase (PAL) M7 and the acyl-CoA ligase M9 are involved in transforming phenylalanine into benzoyl-CoA. The citrate synthase-like protein R3 is involved in connecting the C-alpha-carbons of the hexaketide chain and oxaloacetate to afford the tricarboxylic acid unit. The potential hydrolytic enzymes, M8 and M10, are in close proximity to pks2 and may participate in product release. On the other side, the tetraketide arm is synthesized by a the squalestatin tetraketide synthase pks1 and enzymatically esterified to the core in the last biosynthetic step, by the acetyltransferase M4. The biosynthesis of the tetraketide must involve 3 rounds of chain extension. After the first and second rounds methyl-transfer occurs, and in all rounds of extension the ketoreductase and dehydratase are active. The enoyl reductase and C-MeT of pks1 are not active in the final round of extension. The acetyltransferase M4 appears to have a broad substrate selectivity for its acyl CoA substrate, allowing the in vitro synthesis of novel squalestatins. The biosynthesis of SQS1 requires several oxidative steps likely performed by oxidoreductases M1, R1 and R2. Finally, in support of the identification of the cluster as being responsible for SQS1 production, the cluster contains a gene encoding a putative squalene synthase (SS) R6, suggesting a likely mechanism for self-resistance. The protein is Probable hydrolase M10 of Phoma sp. (strain ATCC 20986 / MF5453).